The following is an 854-amino-acid chain: Probable inactive serine/threonine-protein kinase DDB_G0274821 (854 aa).

Residues methionine 1 to phenylalanine 266 enclose the Protein kinase domain. N-linked (GlcNAc...) asparagine glycans are attached at residues asparagine 32 and asparagine 106. The disordered stretch occupies residues asparagine 116 to asparagine 135. N-linked (GlcNAc...) asparagine glycosylation is found at asparagine 163, asparagine 279, asparagine 283, and asparagine 290. The disordered stretch occupies residues leucine 289–leucine 331. Positions serine 292–glutamine 322 are enriched in low complexity. Residues asparagine 325, asparagine 347, and asparagine 365 are each glycosylated (N-linked (GlcNAc...) asparagine). Residues isoleucine 384 to serine 408 form a disordered region. An N-linked (GlcNAc...) asparagine glycan is attached at asparagine 414. The interval asparagine 425–asparagine 446 is disordered. N-linked (GlcNAc...) asparagine glycans are attached at residues asparagine 520, asparagine 541, and asparagine 620. Residues serine 627–leucine 650 are disordered. Positions serine 633 to leucine 650 are enriched in low complexity. Asparagine 757 carries N-linked (GlcNAc...) asparagine glycosylation. Residues histidine 770 to isoleucine 792 traverse the membrane as a helical segment.

This sequence belongs to the protein kinase superfamily. Ser/Thr protein kinase family.

Its subcellular location is the membrane. The polypeptide is Probable inactive serine/threonine-protein kinase DDB_G0274821 (Dictyostelium discoideum (Social amoeba)).